We begin with the raw amino-acid sequence, 294 residues long: 4-hydroxy-tetrahydrodipicolinate synthase (294 aa).

Pyruvate is bound at residue threonine 47. Tyrosine 135 functions as the Proton donor/acceptor in the catalytic mechanism. Lysine 163 acts as the Schiff-base intermediate with substrate in catalysis. A pyruvate-binding site is contributed by isoleucine 205.

It belongs to the DapA family. In terms of assembly, homotetramer; dimer of dimers.

It is found in the cytoplasm. It catalyses the reaction L-aspartate 4-semialdehyde + pyruvate = (2S,4S)-4-hydroxy-2,3,4,5-tetrahydrodipicolinate + H2O + H(+). The protein operates within amino-acid biosynthesis; L-lysine biosynthesis via DAP pathway; (S)-tetrahydrodipicolinate from L-aspartate: step 3/4. Catalyzes the condensation of (S)-aspartate-beta-semialdehyde [(S)-ASA] and pyruvate to 4-hydroxy-tetrahydrodipicolinate (HTPA). The chain is 4-hydroxy-tetrahydrodipicolinate synthase from Rickettsia typhi (strain ATCC VR-144 / Wilmington).